A 234-amino-acid chain; its full sequence is Sugar fermentation stimulation protein A (234 aa).

A DNA-binding region (H-T-H motif) is located at residues L201–S220.

It belongs to the SfsA family.

Binds to DNA non-specifically. Could be a regulatory factor involved in maltose metabolism. This Escherichia coli O7:K1 (strain IAI39 / ExPEC) protein is Sugar fermentation stimulation protein A.